The chain runs to 126 residues: Adrenocorticotropic hormone receptor (126 aa).

The chain crosses the membrane as a helical span at residues 1–25 (VLPEEIFFTISIVGVLENLIVLLAV). Over 26–34 (FKNKNLQAP) the chain is Cytoplasmic. A helical membrane pass occupies residues 35–55 (MYFFICSLAISDMLGSLYKIL). Over 56 to 80 (ENILIILRNMGYLKPRGSFETTADD) the chain is Extracellular. The helical transmembrane segment at 81-102 (IIDSLFVLSLLGAIFSLSVIAA) threads the bilayer. Topologically, residues 103–123 (DRYITIFHALRYHSIVTMRRT) are cytoplasmic. The helical transmembrane segment at 124 to 126 (VVV) threads the bilayer.

This sequence belongs to the G-protein coupled receptor 1 family. In terms of assembly, interacts with MRAP; increasing ligand-sensitivity and generation of cAMP. Interacts with MRAP2; competing with MRAP for binding to MC2R and impairing the binding of corticotropin (ACTH).

The protein localises to the cell membrane. Its function is as follows. Receptor for corticotropin (ACTH). This receptor is mediated by G proteins (G(s)) which activate adenylate cyclase (cAMP). In Papio hamadryas (Hamadryas baboon), this protein is Adrenocorticotropic hormone receptor (MC2R).